Consider the following 376-residue polypeptide: Queuine tRNA-ribosyltransferase (376 aa).

Aspartate 93 (proton acceptor) is an active-site residue. Substrate-binding positions include 93-97 (DSGGF), aspartate 147, glutamine 190, and glycine 217. The RNA binding stretch occupies residues 248–254 (GVGTPDD). The active-site Nucleophile is aspartate 267. The segment at 272–276 (TRAGR) is RNA binding; important for wobble base 34 recognition.

It belongs to the queuine tRNA-ribosyltransferase family. As to quaternary structure, homodimer. Within each dimer, one monomer is responsible for RNA recognition and catalysis, while the other monomer binds to the replacement base PreQ1.

It catalyses the reaction 7-aminomethyl-7-carbaguanine + guanosine(34) in tRNA = 7-aminomethyl-7-carbaguanosine(34) in tRNA + guanine. It participates in tRNA modification; tRNA-queuosine biosynthesis. In terms of biological role, catalyzes the base-exchange of a guanine (G) residue with the queuine precursor 7-aminomethyl-7-deazaguanine (PreQ1) at position 34 (anticodon wobble position) in tRNAs with GU(N) anticodons (tRNA-Asp, -Asn, -His and -Tyr). Catalysis occurs through a double-displacement mechanism. The nucleophile active site attacks the C1' of nucleotide 34 to detach the guanine base from the RNA, forming a covalent enzyme-RNA intermediate. The proton acceptor active site deprotonates the incoming PreQ1, allowing a nucleophilic attack on the C1' of the ribose to form the product. After dissociation, two additional enzymatic reactions on the tRNA convert PreQ1 to queuine (Q), resulting in the hypermodified nucleoside queuosine (7-(((4,5-cis-dihydroxy-2-cyclopenten-1-yl)amino)methyl)-7-deazaguanosine). This Mesorhizobium japonicum (strain LMG 29417 / CECT 9101 / MAFF 303099) (Mesorhizobium loti (strain MAFF 303099)) protein is Queuine tRNA-ribosyltransferase.